A 64-amino-acid chain; its full sequence is Small ribosomal subunit protein bS21 (64 aa).

The segment at 26–64 (DGILSEARRRTRFERPPTRRKRKDAAKRRLAIKAARKAT) is disordered. The span at 43–64 (TRRKRKDAAKRRLAIKAARKAT) shows a compositional bias: basic residues.

The protein belongs to the bacterial ribosomal protein bS21 family.

In Dehalococcoides mccartyi (strain ATCC BAA-2100 / JCM 16839 / KCTC 5957 / BAV1), this protein is Small ribosomal subunit protein bS21.